The sequence spans 450 residues: MQSNKMTKETKNVLQRGLENIHHPVSNFIRAQTTSSLFLLFATIIALWWANSDYAQSYQALIHTQLGFFIGDFELKASLKHIINDGLMVIFFFLLGLEIKREVIAGELAQAKNRRMLIICAMGGMVCPALIYSGFNWSLDSQIGWGIPMATDTAFALGVLTMVRKHIPSSLVAFIVGLAIVDDVGAILVIAIFYTQEISLMHLLSACALIGFLGVANYAGVRQPLFYFIIGVAAWWAMLKSGVHPTVAGVTIALTIPAQPKLASGKWLEKAKSIISAIQNKSKNMDVLGNKGHHEQVLKVRDFAERASTPLRRWEDALDLPVVLFILPLFALANAGVVINLSSFIESVQHPVGLGIISGLILGKLIGISGACWFALKFNIGCLPDKVDLNHVIGASLIAGIGFTMSTFIATLGFGDQDTALHVAKTSILLASVLTAILGLLYLRFVSTKA.

11 helical membrane-spanning segments follow: residues serine 35 to alanine 55, leucine 79 to isoleucine 99, leucine 117 to tryptophan 137, isoleucine 143 to valine 163, alanine 173 to phenylalanine 193, isoleucine 198 to tyrosine 218, proline 224 to histidine 244, leucine 320 to asparagine 340, isoleucine 356 to leucine 376, valine 392 to leucine 412, and valine 423 to leucine 443.

It belongs to the NhaA Na(+)/H(+) (TC 2.A.33) antiporter family.

Its subcellular location is the cell inner membrane. It carries out the reaction Na(+)(in) + 2 H(+)(out) = Na(+)(out) + 2 H(+)(in). Na(+)/H(+) antiporter that extrudes sodium in exchange for external protons. The polypeptide is Na(+)/H(+) antiporter NhaA 1 (Shewanella denitrificans (strain OS217 / ATCC BAA-1090 / DSM 15013)).